Reading from the N-terminus, the 735-residue chain is Ion-translocating oxidoreductase complex subunit C (735 aa).

2 consecutive 4Fe-4S ferredoxin-type domains span residues 368-397 and 407-436; these read MGAP…QQLY and KATA…VQYF. [4Fe-4S] cluster-binding residues include Cys-377, Cys-380, Cys-383, Cys-387, Cys-416, Cys-419, Cys-422, and Cys-426. Positions 538-715 are disordered; sequence KQAAHPMADS…PADPRKAAVA (178 aa). Residues 556–565 show a composition bias toward low complexity; that stretch reads KAAVEAAIAR.

It belongs to the 4Fe4S bacterial-type ferredoxin family. RnfC subfamily. In terms of assembly, the complex is composed of six subunits: RsxA, RsxB, RsxC, RsxD, RsxE and RsxG. [4Fe-4S] cluster is required as a cofactor.

Its subcellular location is the cell inner membrane. Functionally, part of a membrane-bound complex that couples electron transfer with translocation of ions across the membrane. Required to maintain the reduced state of SoxR. This is Ion-translocating oxidoreductase complex subunit C from Salmonella typhimurium (strain LT2 / SGSC1412 / ATCC 700720).